Consider the following 43-residue polypeptide: Potassium channel toxin gamma-KTx 3.3 (43 aa).

Intrachain disulfides connect Cys-5–Cys-23, Cys-11–Cys-34, Cys-20–Cys-39, and Cys-24–Cys-41.

Belongs to the ergtoxin family. Gamma-KTx 3 subfamily. Expressed by the venom gland.

It is found in the secreted. Its function is as follows. Blocks Kv11/ERG potassium channels. The protein is Potassium channel toxin gamma-KTx 3.3 of Centruroides sculpturatus (Arizona bark scorpion).